The following is a 434-amino-acid chain: Serine--tRNA ligase (434 aa).

Residue 239-241 participates in L-serine binding; that stretch reads TAE. Position 270-272 (270-272) interacts with ATP; it reads RSE. Glutamate 293 lines the L-serine pocket. 357–360 is a binding site for ATP; it reads EISS. Serine 392 provides a ligand contact to L-serine.

It belongs to the class-II aminoacyl-tRNA synthetase family. Type-1 seryl-tRNA synthetase subfamily. In terms of assembly, homodimer. The tRNA molecule binds across the dimer.

It is found in the cytoplasm. It catalyses the reaction tRNA(Ser) + L-serine + ATP = L-seryl-tRNA(Ser) + AMP + diphosphate + H(+). It carries out the reaction tRNA(Sec) + L-serine + ATP = L-seryl-tRNA(Sec) + AMP + diphosphate + H(+). It functions in the pathway aminoacyl-tRNA biosynthesis; selenocysteinyl-tRNA(Sec) biosynthesis; L-seryl-tRNA(Sec) from L-serine and tRNA(Sec): step 1/1. In terms of biological role, catalyzes the attachment of serine to tRNA(Ser). Is also able to aminoacylate tRNA(Sec) with serine, to form the misacylated tRNA L-seryl-tRNA(Sec), which will be further converted into selenocysteinyl-tRNA(Sec). This chain is Serine--tRNA ligase, found in Cupriavidus necator (strain ATCC 17699 / DSM 428 / KCTC 22496 / NCIMB 10442 / H16 / Stanier 337) (Ralstonia eutropha).